A 224-amino-acid chain; its full sequence is Endonuclease NucS (224 aa).

Belongs to the NucS endonuclease family.

It localises to the cytoplasm. Its function is as follows. Cleaves both 3' and 5' ssDNA extremities of branched DNA structures. The protein is Endonuclease NucS of Rhodococcus erythropolis (strain PR4 / NBRC 100887).